The following is a 180-amino-acid chain: UPF0227 protein YcfP (180 aa).

Belongs to the UPF0227 family.

This chain is UPF0227 protein YcfP, found in Escherichia coli O7:K1 (strain IAI39 / ExPEC).